A 130-amino-acid chain; its full sequence is Con-Ins M1 (130 aa).

Residues M1–S21 form the signal peptide. Disulfide bonds link C29–C107, C41–C110, C53–C123, and C109–C114. P34 bears the 4-hydroxyproline; partial mark. Residues A59–R92 constitute a propeptide, c peptide. E118 carries the 4-carboxyglutamate; partial modification. At S129 the chain carries Serine amide.

It belongs to the insulin family. As to quaternary structure, heterodimer of A and B chains; disulfide-linked. As to expression, expressed by the venom gland.

The protein localises to the secreted. This venom insulin facilitates prey capture by rapidly inducing hypoglycemic shock. Intraperitoneal injection of this peptide into zebrafish lowers blood glucose with the same potency than human insulin. In vivo, when applied to water, this peptide reduces overall locomotor activity of zebrafish larvae, observed as a significant decrease in the percentage of time spent swimming and movement frequency. In Conus marmoreus (Marble cone), this protein is Con-Ins M1.